Consider the following 21-residue polypeptide: Buforin-2 (21 aa).

Lysine 21 is modified (N6-(2-hydroxyisobutyryl)lysine; alternate).

Belongs to the histone H2A family. Expressed by the skin glands.

The protein localises to the secreted. Functionally, antimicrobial peptide with potent activity against some Gram-positive and Gram-negative bacteria. Does not permeabilize membrane, but internalizes into bacterial cells and alter specific gene expression involved in bacterial resistance mechanisms. Has the ability to agglutinate E.coli, and lipid vesicles. Shows a weak hemolytic activity, and is not cytotoxic to monocytes. This is Buforin-2 from Sphaenorhynchus lacteus (Orinoco lime treefrog).